The chain runs to 96 residues: Co-chaperonin GroES (96 aa).

This sequence belongs to the GroES chaperonin family. Heptamer of 7 subunits arranged in a ring. Interacts with the chaperonin GroEL.

It is found in the cytoplasm. Its function is as follows. Together with the chaperonin GroEL, plays an essential role in assisting protein folding. The GroEL-GroES system forms a nano-cage that allows encapsulation of the non-native substrate proteins and provides a physical environment optimized to promote and accelerate protein folding. GroES binds to the apical surface of the GroEL ring, thereby capping the opening of the GroEL channel. The polypeptide is Co-chaperonin GroES (Haemophilus influenzae (strain ATCC 51907 / DSM 11121 / KW20 / Rd)).